Consider the following 359-residue polypeptide: POU domain, class 5, transcription factor 1B (359 aa).

Disordered regions lie at residues 1 to 53 (MAGH…GVGP) and 87 to 116 (QGGL…EPCT). Residue serine 111 is modified to Phosphoserine. The POU-specific domain occupies 138–212 (DIKALQKELE…LLQKWVEEAD (75 aa)). The homeobox DNA-binding region spans 229 to 288 (ARKRKRTSIENRVRGNLENLFLQCPKPTLQISHIAQQLGLEKDVVRVWFCNRRQKGKRSS). Threonine 235 bears the Phosphothreonine mark. Phosphoserine is present on residues serine 236, serine 288, and serine 289. The tract at residues 287-322 (SSSDYAQREDFEAAGSPFSGGPVSFPPAPGPHFGTP) is disordered. Residues 299–309 (AAGSPFSGGPV) are compositionally biased toward low complexity. Phosphoserine is present on serine 354.

Belongs to the POU transcription factor family. Class-5 subfamily. Detected in epithelial cells of the prostate (at protein level). Detected at the mRNA level in several cancer tissues (breast, uterine cervix, lung, thyroid gland, esophagus, colon, urinary bladder, and glioma).

It is found in the nucleus. The protein resides in the cytoplasm. Shows weak transcriptional activator activity. In Homo sapiens (Human), this protein is POU domain, class 5, transcription factor 1B (POU5F1B).